The primary structure comprises 254 residues: Nickel import ATP-binding protein NikD (254 aa).

The ABC transporter domain occupies 2-241 (PQQIELRDIA…PKHAVTRSLV (240 aa)). Position 36–43 (36–43 (GGSGSGKS)) interacts with ATP.

This sequence belongs to the ABC transporter superfamily. Nickel importer (TC 3.A.1.5.3) family. The complex is composed of two ATP-binding proteins (NikD and NikE), two transmembrane proteins (NikB and NikC) and a solute-binding protein (NikA).

Its subcellular location is the cell inner membrane. It catalyses the reaction Ni(2+)(out) + ATP + H2O = Ni(2+)(in) + ADP + phosphate + H(+). In terms of biological role, part of the ABC transporter complex NikABCDE involved in nickel import. Responsible for energy coupling to the transport system. The protein is Nickel import ATP-binding protein NikD of Shigella dysenteriae serotype 1 (strain Sd197).